A 165-amino-acid chain; its full sequence is Phosphopantetheine adenylyltransferase (165 aa).

Ser-10 provides a ligand contact to substrate. Residues 10–11 (SF) and His-18 each bind ATP. Residues Lys-42, Thr-79, and Arg-93 each contribute to the substrate site. ATP-binding positions include 94–96 (GLR), Glu-104, and 129–135 (VRPITAT).

It belongs to the bacterial CoaD family. In terms of assembly, homohexamer. It depends on Mg(2+) as a cofactor.

The protein localises to the cytoplasm. The catalysed reaction is (R)-4'-phosphopantetheine + ATP + H(+) = 3'-dephospho-CoA + diphosphate. The protein operates within cofactor biosynthesis; coenzyme A biosynthesis; CoA from (R)-pantothenate: step 4/5. Reversibly transfers an adenylyl group from ATP to 4'-phosphopantetheine, yielding dephospho-CoA (dPCoA) and pyrophosphate. The sequence is that of Phosphopantetheine adenylyltransferase from Nitrobacter winogradskyi (strain ATCC 25391 / DSM 10237 / CIP 104748 / NCIMB 11846 / Nb-255).